A 652-amino-acid polypeptide reads, in one-letter code: Beta-mannosyltransferase 1 (652 aa).

Residues methionine 1–arginine 15 lie on the Cytoplasmic side of the membrane. Residues leucine 16–tyrosine 34 form a helical membrane-spanning segment. At lysine 35–serine 652 the chain is on the extracellular side. Asparagine 57 carries an N-linked (GlcNAc...) asparagine glycan. A coiled-coil region spans residues proline 535–serine 652. The tract at residues alanine 536–lysine 621 is disordered.

It belongs to the BMT family.

The protein resides in the membrane. Its function is as follows. Beta-mannosyltransferase involved in cell wall biosynthesis. Involved in the beta-mannosylation of outer chains of N-glycans. The protein is Beta-mannosyltransferase 1 (BMT1) of Komagataella phaffii (strain ATCC 76273 / CBS 7435 / CECT 11047 / NRRL Y-11430 / Wegner 21-1) (Yeast).